The primary structure comprises 647 residues: Zinc transporter ZIP4 (647 aa).

The N-terminal stretch at methionine 1–alanine 22 is a signal peptide. At serine 23–tyrosine 327 the chain is on the extracellular side. 3 disulfide bridges follow: cysteine 57–cysteine 62, cysteine 65–cysteine 111, and cysteine 160–cysteine 195. Residues glutamate 236 to proline 255 form a disordered region. N-linked (GlcNAc...) asparagine glycosylation is present at asparagine 261. Cysteine 270 and cysteine 309 form a disulfide bridge. Residues leucine 328 to leucine 348 form a helical membrane-spanning segment. The Cytoplasmic segment spans residues threonine 349–tyrosine 359. A helical transmembrane segment spans residues isoleucine 360–leucine 380. The Extracellular segment spans residues threonine 381–arginine 402. Residues leucine 403–leucine 423 traverse the membrane as a helical segment. Over leucine 424–tyrosine 498 the chain is Cytoplasmic. The Essential for SLC39A4 endocytosis signature appears at leucine 452–leucine 454. Residues glutamate 458–proline 484 form a disordered region. The segment covering arginine 460 to arginine 470 has biased composition (basic and acidic residues). Residues methionine 499–alanine 518 traverse the membrane as a helical segment. Zn(2+) contacts are provided by histidine 507, asparagine 508, and aspartate 511. Topologically, residues phenylalanine 519–glycine 526 are extracellular. The helical transmembrane segment at leucine 527–leucine 553 threads the bilayer. Residues histidine 536, glutamate 537, and histidine 540 each contribute to the Zn(2+) site. Topologically, residues serine 554–alanine 558 are cytoplasmic. The helical transmembrane segment at leucine 559–valine 579 threads the bilayer. The Extracellular segment spans residues glycine 580 to glutamate 586. A helical transmembrane segment spans residues alanine 587–proline 607. Over alanine 608–proline 617 the chain is Cytoplasmic. The chain crosses the membrane as a helical span at residues tryptophan 618–leucine 638. The Extracellular portion of the chain corresponds to serine 639–phenylalanine 647.

It belongs to the ZIP transporter (TC 2.A.5) family. As to quaternary structure, homodimer; homodimerization is mediated by the transmembrane domain. The extracellular N-terminal ectodomain is cleaved when cells are Zn(2+) deficient, N-terminally cleaved SLC39A4 is internalized at a faster rate. Post-translationally, under excess Zn(2+) conditions, SLC39A4 on the cell surface is rapidly endocytosed, ubiquitinated and degraded. In terms of processing, glycosylated. Highly expressed in kidney, small intestine, stomach, colon, jejunum and duodenum.

It is found in the cell membrane. The protein localises to the recycling endosome membrane. Its subcellular location is the apical cell membrane. It carries out the reaction Zn(2+)(in) = Zn(2+)(out). With respect to regulation, the Zn(2+) uniporter activity is regulated by zinc availability. Extracellular acidification stimulated SLC39A4-dependent Zn(2+) uptake. Functionally, selective transporter that mediates the uptake of Zn(2+). Plays an essential role for dietary zinc uptake from small intestine. The Zn(2+) uniporter activity is regulated by zinc availability. Also exhibits polyspecific binding and transport of Cu(2+), Cd(2+) and possibly Ni(2+) but at higher concentrations. The sequence is that of Zinc transporter ZIP4 from Homo sapiens (Human).